A 208-amino-acid chain; its full sequence is ATP phosphoribosyltransferase (208 aa).

The protein belongs to the ATP phosphoribosyltransferase family. Short subfamily. As to quaternary structure, heteromultimer composed of HisG and HisZ subunits.

The protein localises to the cytoplasm. The catalysed reaction is 1-(5-phospho-beta-D-ribosyl)-ATP + diphosphate = 5-phospho-alpha-D-ribose 1-diphosphate + ATP. It participates in amino-acid biosynthesis; L-histidine biosynthesis; L-histidine from 5-phospho-alpha-D-ribose 1-diphosphate: step 1/9. In terms of biological role, catalyzes the condensation of ATP and 5-phosphoribose 1-diphosphate to form N'-(5'-phosphoribosyl)-ATP (PR-ATP). Has a crucial role in the pathway because the rate of histidine biosynthesis seems to be controlled primarily by regulation of HisG enzymatic activity. The sequence is that of ATP phosphoribosyltransferase from Oceanobacillus iheyensis (strain DSM 14371 / CIP 107618 / JCM 11309 / KCTC 3954 / HTE831).